A 254-amino-acid polypeptide reads, in one-letter code: Fasciclin-like arabinogalactan protein 7 (254 aa).

The N-terminal stretch at 1-22 is a signal peptide; that stretch reads MAKMQLSIFIAVVALIVCSASA. The FAS1 domain occupies 44–186; that stretch reads NVNLTELLSV…VAVYQVNRVL (143 aa). Asparagine 46, asparagine 78, asparagine 104, and asparagine 130 each carry an N-linked (GlcNAc...) asparagine glycan. A disordered region spans residues 203–233; it reads APAPIVSAPSDSPSVADSEGASSPKSSHKNS. Over residues 206–220 the composition is skewed to low complexity; sequence PIVSAPSDSPSVADS. Residues 222–233 show a composition bias toward polar residues; the sequence is GASSPKSSHKNS. Asparagine 232 carries the GPI-anchor amidated asparagine lipid modification. The propeptide at 233-254 is removed in mature form; the sequence is SGQKLLLAPISMVISGLVALFL.

This sequence belongs to the fasciclin-like AGP family.

It localises to the cell membrane. Functionally, may be a cell surface adhesion protein. The polypeptide is Fasciclin-like arabinogalactan protein 7 (FLA7) (Arabidopsis thaliana (Mouse-ear cress)).